We begin with the raw amino-acid sequence, 524 residues long: GMP synthase [glutamine-hydrolyzing] (524 aa).

Residues 9-207 (RILILDFGSQ…VIHICQCIPN (199 aa)) form the Glutamine amidotransferase type-1 domain. The Nucleophile role is filled by Cys86. Residues His181 and Glu183 contribute to the active site. Residues 208 to 399 (WTTKHIIEDS…LGLPADLIYR (192 aa)) form the GMPS ATP-PPase domain. 235 to 241 (SGGVDSA) lines the ATP pocket.

In terms of assembly, homodimer.

It carries out the reaction XMP + L-glutamine + ATP + H2O = GMP + L-glutamate + AMP + diphosphate + 2 H(+). It functions in the pathway purine metabolism; GMP biosynthesis; GMP from XMP (L-Gln route): step 1/1. Its function is as follows. Catalyzes the synthesis of GMP from XMP. The polypeptide is GMP synthase [glutamine-hydrolyzing] (Coxiella burnetii (strain CbuK_Q154) (Coxiella burnetii (strain Q154))).